Here is a 109-residue protein sequence, read N- to C-terminus: MRNPLMQPWLTEKSTGLTEQKGQYVFKVKSAANKTEIKAAVEAKFGVDVASVRTVNCLGKTKRQFTRKGVLAGKKNDWKKAFITLKEGQAIDYYSGSTDQGEEKKSNKG.

The protein belongs to the universal ribosomal protein uL23 family. In terms of assembly, part of the 50S ribosomal subunit. Contacts protein L29, and trigger factor when it is bound to the ribosome.

Its function is as follows. One of the early assembly proteins it binds 23S rRNA. One of the proteins that surrounds the polypeptide exit tunnel on the outside of the ribosome. Forms the main docking site for trigger factor binding to the ribosome. This is Large ribosomal subunit protein uL23 from Prosthecochloris aestuarii (strain DSM 271 / SK 413).